A 98-amino-acid polypeptide reads, in one-letter code: Protein translation factor SUI1 homolog (98 aa).

It belongs to the SUI1 family.

This is Protein translation factor SUI1 homolog from Pyrococcus abyssi (strain GE5 / Orsay).